A 416-amino-acid chain; its full sequence is Esterase FrsA (416 aa).

The segment at 19 to 39 (ETSTLVRRTRHDQETQGLHST) is disordered.

The protein belongs to the FrsA family.

The enzyme catalyses a carboxylic ester + H2O = an alcohol + a carboxylate + H(+). Its function is as follows. Catalyzes the hydrolysis of esters. The protein is Esterase FrsA of Pectobacterium atrosepticum (strain SCRI 1043 / ATCC BAA-672) (Erwinia carotovora subsp. atroseptica).